A 699-amino-acid polypeptide reads, in one-letter code: DNA ligase (699 aa).

The tract at residues M1–R29 is disordered. Residues D60–D64, S108–I109, and E137 each bind NAD(+). K139 acts as the N6-AMP-lysine intermediate in catalysis. Residues R160, E196, K311, and K335 each contribute to the NAD(+) site. Residues C425, C428, C441, and C447 each coordinate Zn(2+). Residues S613–R666 form the BRCT domain.

This sequence belongs to the NAD-dependent DNA ligase family. LigA subfamily. The cofactor is Mg(2+). It depends on Mn(2+) as a cofactor.

It carries out the reaction NAD(+) + (deoxyribonucleotide)n-3'-hydroxyl + 5'-phospho-(deoxyribonucleotide)m = (deoxyribonucleotide)n+m + AMP + beta-nicotinamide D-nucleotide.. Its activity is regulated as follows. Displays maximal in vitro activity at high salt levels. Functionally, DNA ligase that catalyzes the formation of phosphodiester linkages between 5'-phosphoryl and 3'-hydroxyl groups in double-stranded DNA using NAD as a coenzyme and as the energy source for the reaction. It is essential for DNA replication and repair of damaged DNA. In Haloferax volcanii (strain ATCC 29605 / DSM 3757 / JCM 8879 / NBRC 14742 / NCIMB 2012 / VKM B-1768 / DS2) (Halobacterium volcanii), this protein is DNA ligase.